Here is a 399-residue protein sequence, read N- to C-terminus: Serine/threonine-protein kinase PKZ1 (399 aa).

Positions 30 to 50 are disordered; the sequence is PMQCAYQTQSHSNPEGAKRGR. The Protein kinase domain maps to 92-371; sequence WQLFDQIGAG…ADQMLQHPWM (280 aa). ATP-binding positions include 98 to 106 and K121; that span reads IGAGAFGVV. The Proton acceptor role is filled by D219.

Belongs to the protein kinase superfamily. CAMK Ser/Thr protein kinase family.

The catalysed reaction is L-seryl-[protein] + ATP = O-phospho-L-seryl-[protein] + ADP + H(+). It carries out the reaction L-threonyl-[protein] + ATP = O-phospho-L-threonyl-[protein] + ADP + H(+). In terms of biological role, may regulate an early stage of the zoospore pathway. This Phytophthora infestans (strain T30-4) (Potato late blight agent) protein is Serine/threonine-protein kinase PKZ1.